We begin with the raw amino-acid sequence, 206 residues long: Large ribosomal subunit protein uL4 (206 aa).

This sequence belongs to the universal ribosomal protein uL4 family. As to quaternary structure, part of the 50S ribosomal subunit.

Its function is as follows. One of the primary rRNA binding proteins, this protein initially binds near the 5'-end of the 23S rRNA. It is important during the early stages of 50S assembly. It makes multiple contacts with different domains of the 23S rRNA in the assembled 50S subunit and ribosome. Functionally, forms part of the polypeptide exit tunnel. The chain is Large ribosomal subunit protein uL4 from Methylocella silvestris (strain DSM 15510 / CIP 108128 / LMG 27833 / NCIMB 13906 / BL2).